Consider the following 181-residue polypeptide: Large ribosomal subunit protein uL6 (181 aa).

Belongs to the universal ribosomal protein uL6 family. In terms of assembly, part of the 50S ribosomal subunit.

Functionally, this protein binds to the 23S rRNA, and is important in its secondary structure. It is located near the subunit interface in the base of the L7/L12 stalk, and near the tRNA binding site of the peptidyltransferase center. This chain is Large ribosomal subunit protein uL6, found in Phytoplasma mali (strain AT).